The sequence spans 261 residues: Putative hydro-lyase VSAL_I1435 (261 aa).

This sequence belongs to the D-glutamate cyclase family.

This is Putative hydro-lyase VSAL_I1435 from Aliivibrio salmonicida (strain LFI1238) (Vibrio salmonicida (strain LFI1238)).